Reading from the N-terminus, the 372-residue chain is Chaperone protein DnaJ (372 aa).

A J domain is found at 5 to 70; that stretch reads DYYEVLGVSK…QKRAAYDQYG (66 aa). A CR-type zinc finger spans residues 127–205; it reads GVTKEIRIPT…CHGHGRVERY (79 aa). Positions 140, 143, 157, 160, 179, 182, 193, and 196 each coordinate Zn(2+). CXXCXGXG motif repeat units follow at residues 140–147, 157–164, 179–186, and 193–200; these read CDICHGSG, CSTCQGAG, CPHCHGRG, and CHKCHGHG.

Belongs to the DnaJ family. In terms of assembly, homodimer. Zn(2+) is required as a cofactor.

It is found in the cytoplasm. In terms of biological role, participates actively in the response to hyperosmotic and heat shock by preventing the aggregation of stress-denatured proteins and by disaggregating proteins, also in an autonomous, DnaK-independent fashion. Unfolded proteins bind initially to DnaJ; upon interaction with the DnaJ-bound protein, DnaK hydrolyzes its bound ATP, resulting in the formation of a stable complex. GrpE releases ADP from DnaK; ATP binding to DnaK triggers the release of the substrate protein, thus completing the reaction cycle. Several rounds of ATP-dependent interactions between DnaJ, DnaK and GrpE are required for fully efficient folding. Also involved, together with DnaK and GrpE, in the DNA replication of plasmids through activation of initiation proteins. The sequence is that of Chaperone protein DnaJ from Photorhabdus laumondii subsp. laumondii (strain DSM 15139 / CIP 105565 / TT01) (Photorhabdus luminescens subsp. laumondii).